Reading from the N-terminus, the 330-residue chain is Ferredoxin--NADP reductase (330 aa).

FAD-binding residues include glutamate 35, glutamine 43, tyrosine 48, valine 90, phenylalanine 123, aspartate 285, and threonine 326.

This sequence belongs to the ferredoxin--NADP reductase type 2 family. In terms of assembly, homodimer. FAD is required as a cofactor.

It catalyses the reaction 2 reduced [2Fe-2S]-[ferredoxin] + NADP(+) + H(+) = 2 oxidized [2Fe-2S]-[ferredoxin] + NADPH. The sequence is that of Ferredoxin--NADP reductase from Streptococcus pyogenes serotype M1.